We begin with the raw amino-acid sequence, 516 residues long: MTDIHNHKILILDFGSQYTQLIARRVREVGVFCEIFPHDVAADFIKNYQAKGIILSGGPESVYDSDVKAPEIVFELGVPVLGICYGMQTMVMQHGGEVKGADQSEFGKAIINILNSTNNIFSNMEHEQLVWMSHSDKVTQTGEHFEIIASSTNAPVAAVAHKNKPFFGVQFHPETTHTENGKQIIENFVVNICGCDTLWNIENIIENDIKEIKQKVGTDKVILGLSGGVDSSVVAAILHQAIGDQLTCIFVDTGLLRLNEGDQVMQVFAEHMDINVIRINAKNRFLDALRGICDPEQKRKIIGKLFVDIFDEEAAKIENAKWLAQGTIYSDVIESAGNNQSKAHVIKSHHNVGGLPKEMKLKLLEPLRELFKDEVRKLGLGLGLPYNMLYRHPFPGPGLGVRILGEIKKEYVETLQKADAIFTEELYKHNLYHDVSQAFGVFLPVKSVGVVGDQRRYEYVIALRAVVSIDFMTATWANLPYDFLSLVSNRIVNEVKQVSRVVYDVTGKPPGTIEWE.

Residues 8 to 198 (KILILDFGSQ…VVNICGCDTL (191 aa)) enclose the Glutamine amidotransferase type-1 domain. Cys-84 serves as the catalytic Nucleophile. Catalysis depends on residues His-172 and Glu-174. A GMPS ATP-PPase domain is found at 199–391 (WNIENIIEND…LGLPYNMLYR (193 aa)). 226-232 (SGGVDSS) serves as a coordination point for ATP.

As to quaternary structure, homodimer.

It catalyses the reaction XMP + L-glutamine + ATP + H2O = GMP + L-glutamate + AMP + diphosphate + 2 H(+). Its pathway is purine metabolism; GMP biosynthesis; GMP from XMP (L-Gln route): step 1/1. Functionally, catalyzes the synthesis of GMP from XMP. The sequence is that of GMP synthase [glutamine-hydrolyzing] from Francisella tularensis subsp. tularensis (strain FSC 198).